Reading from the N-terminus, the 157-residue chain is Succinate dehydrogenase assembly factor 2-A, mitochondrial (157 aa).

The protein belongs to the SDHAF2 family. In terms of assembly, interacts with the flavoprotein subunit within the SDH catalytic dimer.

It localises to the mitochondrion matrix. Its function is as follows. Plays an essential role in the assembly of succinate dehydrogenase (SDH), an enzyme complex (also referred to as respiratory complex II) that is a component of both the tricarboxylic acid (TCA) cycle and the mitochondrial electron transport chain, and which couples the oxidation of succinate to fumarate with the reduction of ubiquinone (coenzyme Q) to ubiquinol. Required for flavinylation (covalent attachment of FAD) of the flavoprotein subunit of the SDH catalytic dimer. In Drosophila willistoni (Fruit fly), this protein is Succinate dehydrogenase assembly factor 2-A, mitochondrial.